We begin with the raw amino-acid sequence, 183 residues long: Large ribosomal subunit protein uL5 (183 aa).

This sequence belongs to the universal ribosomal protein uL5 family. As to quaternary structure, part of the 50S ribosomal subunit; part of the 5S rRNA/L5/L18/L25 subcomplex. Contacts the 5S rRNA and the P site tRNA. Forms a bridge to the 30S subunit in the 70S ribosome.

This is one of the proteins that bind and probably mediate the attachment of the 5S RNA into the large ribosomal subunit, where it forms part of the central protuberance. In the 70S ribosome it contacts protein S13 of the 30S subunit (bridge B1b), connecting the 2 subunits; this bridge is implicated in subunit movement. Contacts the P site tRNA; the 5S rRNA and some of its associated proteins might help stabilize positioning of ribosome-bound tRNAs. This is Large ribosomal subunit protein uL5 from Kosmotoga olearia (strain ATCC BAA-1733 / DSM 21960 / TBF 19.5.1).